The sequence spans 159 residues: Large ribosomal subunit protein uL15 (159 aa).

Positions 14–44 (ASRKRVGRGRATGWGCTSGRGNKGQNSRAGA) are disordered. Over residues 23-35 (RATGWGCTSGRGN) the composition is skewed to gly residues.

Belongs to the universal ribosomal protein uL15 family. As to quaternary structure, part of the 50S ribosomal subunit.

Functionally, binds to the 23S rRNA. The polypeptide is Large ribosomal subunit protein uL15 (Solidesulfovibrio magneticus (strain ATCC 700980 / DSM 13731 / RS-1) (Desulfovibrio magneticus)).